The chain runs to 383 residues: Gap junction alpha-1 protein (383 aa).

Topologically, residues 2–23 (GDWSALGKLLDKVQAYSTAGGK) are cytoplasmic. S5 carries the post-translational modification Phosphoserine. Residues 24 to 44 (VWLSVLFIFRILLLGTAVESA) form a helical membrane-spanning segment. Over 45–76 (WGDEQSAFRCNTQQPGCENVCYDKSFPISHVR) the chain is Extracellular. Intrachain disulfides connect C54-C193 and C188-C199. A helical membrane pass occupies residues 77–97 (FWVLQIIFVSVPTLLYLAHVF). The Cytoplasmic portion of the chain corresponds to 98-156 (YVMRKEEKLNKKEEELKVVAQTDGANVDMHLKQIEIKKFKYGIEEHGKVKMRGGLLRTY). Residue K145 forms a Glycyl lysine isopeptide (Lys-Gly) (interchain with G-Cter in SUMO) linkage. The helical transmembrane segment at 157–177 (IISILFKSVFEVAFLLIQWYI) threads the bilayer. The Extracellular segment spans residues 178 to 208 (YGFSLSAVYTCKRDPCPHQVDCFLSRPTEKT). Residues 209–229 (IFIIFMLVVSLVSLALNIIEL) traverse the membrane as a helical segment. Residues 230 to 383 (FYVFFKGVKD…SRPRPDDLEI (154 aa)) are Cytoplasmic-facing. K238 is covalently cross-linked (Glycyl lysine isopeptide (Lys-Gly) (interchain with G-Cter in SUMO)). The interval 245–383 (SDPYHTTTGP…SRPRPDDLEI (139 aa)) is interaction with NOV. Residue Y248 is modified to Phosphotyrosine. Residues S256, S258, and S263 each carry the phosphoserine modification. Positions 265–383 (KYAYFNGCSS…SRPRPDDLEI (119 aa)) are interaction with UBQLN4. C272 bears the S-nitrosocysteine mark. At T276 the chain carries Phosphothreonine. S307 and S315 each carry phosphoserine. The span at 318 to 333 (QNRMGQAGSTISNSHA) shows a compositional bias: polar residues. Residues 318 to 383 (QNRMGQAGST…SRPRPDDLEI (66 aa)) form a disordered region. S326 bears the Phosphoserine; by CK1 mark. T327 is modified (phosphothreonine). Phosphoserine; by CK1 occurs at positions 329 and 331. Residues 339 to 352 (PDDHQNSKKLDAGH) show a composition bias toward basic and acidic residues. 2 positions are modified to phosphoserine: S345 and S366. Over residues 363-375 (RPSSRASSRASSR) the composition is skewed to low complexity. S369 carries the phosphoserine; by PKC/PRKCG and PKC/PRKCD modification. Residues S370 and S374 each carry the phosphoserine modification.

Belongs to the connexin family. Alpha-type (group II) subfamily. In terms of assembly, a connexon is composed of a hexamer of connexins. Interacts with SGSM3. Interacts with RIC1/CIP150. Interacts with CNST and CSNK1D. Interacts (via C-terminus) with TJP1. Interacts (via C-terminus) with SRC (via SH3 domain). Interacts (not ubiquitinated) with UBQLN4 (via UBA domain). Interacts with NOV. Interacts with TMEM65. Interacts with ANK3/ANKG and PKP2. Phosphorylation at Ser-326, Ser-329 and Ser-331 by CK1 modulates gap junction assembly. Phosphorylated at Ser-369 by PRKCG; phosphorylation induces disassembly of gap junction plaques and inhibition of gap junction activity. Phosphorylation at Ser-369 by PRKCD triggers its internalization into small vesicles leading to proteasome-mediated degradation. In terms of processing, sumoylated with SUMO1, SUMO2 and SUMO3, which may regulate the level of functional Cx43 gap junctions at the plasma membrane. May be desumoylated by SENP1 or SENP2. Post-translationally, acetylated in the developing cortex; leading to delocalization from the cell membrane.

The protein localises to the cell membrane. It localises to the cell junction. It is found in the gap junction. The protein resides in the endoplasmic reticulum. Its function is as follows. Gap junction protein that acts as a regulator of bladder capacity. A gap junction consists of a cluster of closely packed pairs of transmembrane channels, the connexons, through which materials of low MW diffuse from one cell to a neighboring cell. May play a critical role in the physiology of hearing by participating in the recycling of potassium to the cochlear endolymph. Negative regulator of bladder functional capacity: acts by enhancing intercellular electrical and chemical transmission, thus sensitizing bladder muscles to cholinergic neural stimuli and causing them to contract. May play a role in cell growth inhibition through the regulation of NOV expression and localization. Plays an essential role in gap junction communication in the ventricles. The polypeptide is Gap junction alpha-1 protein (GJA1) (Bos taurus (Bovine)).